Here is a 1370-residue protein sequence, read N- to C-terminus: DNA-directed RNA polymerase subunit beta (1370 aa).

It belongs to the RNA polymerase beta chain family. As to quaternary structure, the RNAP catalytic core consists of 2 alpha, 1 beta, 1 beta' and 1 omega subunit. When a sigma factor is associated with the core the holoenzyme is formed, which can initiate transcription.

It catalyses the reaction RNA(n) + a ribonucleoside 5'-triphosphate = RNA(n+1) + diphosphate. Its function is as follows. DNA-dependent RNA polymerase catalyzes the transcription of DNA into RNA using the four ribonucleoside triphosphates as substrates. This Bordetella petrii (strain ATCC BAA-461 / DSM 12804 / CCUG 43448) protein is DNA-directed RNA polymerase subunit beta.